Consider the following 461-residue polypeptide: Photosystem II CP43 reaction center protein (461 aa).

The propeptide occupies 1–2 (ME). Residue Thr3 is modified to N-acetylthreonine. Thr3 carries the post-translational modification Phosphothreonine. The next 5 membrane-spanning stretches (helical) occupy residues 57–81 (LFEVAHFVPEKPMYEQGLILLPHLA), 122–143 (LIGPETLEESFPFFGYVWKDKS), 166–188 (KSVYFGGVYDTWAPGGGDVRKIT), 243–263 (KPFAWARRAFVWSGEAYLSYS), and 279–300 (WFNNTAYPSEFYGPTGPEASQA). Glu355 contributes to the [CaMn4O5] cluster binding site. A helical transmembrane segment spans residues 435 to 459 (RARAAAAGFEKGIDRDTEPVLSMTP).

This sequence belongs to the PsbB/PsbC family. PsbC subfamily. As to quaternary structure, PSII is composed of 1 copy each of membrane proteins PsbA, PsbB, PsbC, PsbD, PsbE, PsbF, PsbH, PsbI, PsbJ, PsbK, PsbL, PsbM, PsbT, PsbX, PsbY, PsbZ, Psb30/Ycf12, at least 3 peripheral proteins of the oxygen-evolving complex and a large number of cofactors. It forms dimeric complexes. The cofactor is Binds multiple chlorophylls and provides some of the ligands for the Ca-4Mn-5O cluster of the oxygen-evolving complex. It may also provide a ligand for a Cl- that is required for oxygen evolution. PSII binds additional chlorophylls, carotenoids and specific lipids..

Its subcellular location is the plastid. It is found in the chloroplast thylakoid membrane. Functionally, one of the components of the core complex of photosystem II (PSII). It binds chlorophyll and helps catalyze the primary light-induced photochemical processes of PSII. PSII is a light-driven water:plastoquinone oxidoreductase, using light energy to abstract electrons from H(2)O, generating O(2) and a proton gradient subsequently used for ATP formation. This Psilotum nudum (Whisk fern) protein is Photosystem II CP43 reaction center protein.